The chain runs to 178 residues: Inorganic pyrophosphatase (178 aa).

The substrate site is built by Lys30, Arg44, and Tyr56. The Mg(2+) site is built by Asp66, Asp71, and Asp103. Tyr140 contacts substrate.

It belongs to the PPase family. In terms of assembly, homohexamer. It depends on Mg(2+) as a cofactor.

It is found in the cytoplasm. The enzyme catalyses diphosphate + H2O = 2 phosphate + H(+). In terms of biological role, catalyzes the hydrolysis of inorganic pyrophosphate (PPi) forming two phosphate ions. The sequence is that of Inorganic pyrophosphatase from Pyrococcus abyssi (strain GE5 / Orsay).